Here is a 545-residue protein sequence, read N- to C-terminus: CWF19-like protein 1 homolog (545 aa).

Residues 306-329 (YFYDMDGGRRKRQGGDNNKRDKRP) are disordered.

It belongs to the CWF19 family.

The sequence is that of CWF19-like protein 1 homolog from Drosophila melanogaster (Fruit fly).